Here is a 316-residue protein sequence, read N- to C-terminus: Probable cobalamin biosynthesis protein CobD (316 aa).

5 consecutive transmembrane segments (helical) span residues 1–21 (MITEIFPFSVLILALLIDIVL), 50–70 (ISGMIISVLVISGAVLAGFAL), 89–109 (ILALIISSYLLKSTFAFKSLI), 165–185 (PLFYYVLFSCAGLGVEAALAF), and 294–314 (ISLIGRAMVLAALLSALLLIL).

Belongs to the CobD/CbiB family.

The protein resides in the cell membrane. It participates in cofactor biosynthesis; adenosylcobalamin biosynthesis. Its function is as follows. Converts cobyric acid to cobinamide by the addition of aminopropanol on the F carboxylic group. This is Probable cobalamin biosynthesis protein CobD from Methanothrix thermoacetophila (strain DSM 6194 / JCM 14653 / NBRC 101360 / PT) (Methanosaeta thermophila).